We begin with the raw amino-acid sequence, 304 residues long: Methionyl-tRNA formyltransferase (304 aa).

111–114 (SLLP) contacts (6S)-5,6,7,8-tetrahydrofolate.

It belongs to the Fmt family.

It carries out the reaction L-methionyl-tRNA(fMet) + (6R)-10-formyltetrahydrofolate = N-formyl-L-methionyl-tRNA(fMet) + (6S)-5,6,7,8-tetrahydrofolate + H(+). Attaches a formyl group to the free amino group of methionyl-tRNA(fMet). The formyl group appears to play a dual role in the initiator identity of N-formylmethionyl-tRNA by promoting its recognition by IF2 and preventing the misappropriation of this tRNA by the elongation apparatus. This is Methionyl-tRNA formyltransferase from Campylobacter fetus subsp. fetus (strain 82-40).